Consider the following 355-residue polypeptide: Mitogen-activated protein kinase (355 aa).

Residues 23–311 (YDIQDVVGEG…VEEALKHPYL (289 aa)) form the Protein kinase domain. Residues 29-37 (VGEGAYGVV) and lysine 52 each bind ATP. Aspartate 147 (proton acceptor) is an active-site residue. Residue threonine 183 is modified to Phosphothreonine. The TXY signature appears at 183-185 (TEY). Tyrosine 185 is modified (phosphotyrosine).

It belongs to the protein kinase superfamily. CMGC Ser/Thr protein kinase family. MAP kinase subfamily. In terms of processing, dually phosphorylated on Thr-183 and Tyr-185, which activates the enzyme.

The protein localises to the nucleus. The catalysed reaction is L-seryl-[protein] + ATP = O-phospho-L-seryl-[protein] + ADP + H(+). The enzyme catalyses L-threonyl-[protein] + ATP = O-phospho-L-threonyl-[protein] + ADP + H(+). With respect to regulation, activated by tyrosine and threonine phosphorylation. Its function is as follows. Responds to activation by environmental stress by phosphorylating downstream targets. The sequence is that of Mitogen-activated protein kinase (MAPK) from Fusarium vanettenii (Neocosmospora pisi).